The primary structure comprises 1325 residues: Protein PHYTOCHROME-DEPENDENT LATE-FLOWERING (1325 aa).

2 stretches are compositionally biased toward polar residues: residues 313 to 331 and 504 to 515; these read IGST…SVSG and NFPQTSWNVNPG. 5 disordered regions span residues 313–371, 462–558, 593–616, 852–875, and 1160–1325; these read IGST…MPGL, EPFE…EFSG, ANEA…NSLP, VAGQ…NSTQ, and QQQQ…GNNS. Basic and acidic residues predominate over residues 518–529; it reads IEKEPKKEEQFS. The segment covering 596–607 has biased composition (low complexity); that stretch reads AMQQRQHQAQMA. Residues 863-875 are compositionally biased toward polar residues; sequence HGNTGNTPNNSTQ. The segment covering 1160 to 1224 has biased composition (low complexity); the sequence is QQQQQQQLQQ…QQQATASPLQ (65 aa). A compositionally biased stretch (polar residues) spans 1225-1239; it reads SVLSPPQVGSPSAGI. A compositionally biased stretch (low complexity) spans 1240–1262; that stretch reads TQQQLQQSSPQQMSQRTPMSPQQ. Composition is skewed to polar residues over residues 1263 to 1286 and 1293 to 1325; these read VNQR…TSNL and PQLS…GNNS.

As to quaternary structure, component of a red light-dependent nuclear complex made of PHL, PHYB and CO. Interacts directly with PHYB and CO; CO binding requires the presence of PHYB. Mostly expressed in cotyledons and leaves, both in mesophyll and vasculature cells. Also present in roots, hypocotyls and shoot apices.

The protein localises to the nucleus. Its subcellular location is the nuclear body. It localises to the cytoplasmic granule. The protein resides in the cytoplasm. Functionally, triggers photoperiod-monitored flowering by repressing PHYB-dependent flowering negative regulation, probably through physical interactions with PHYB and CO. In Arabidopsis thaliana (Mouse-ear cress), this protein is Protein PHYTOCHROME-DEPENDENT LATE-FLOWERING.